The primary structure comprises 657 residues: Methionine--tRNA ligase (657 aa).

The short motif at 13–23 (YYPSGNLHIGH) is the 'HIGH' region element. Residues 308-312 (KMSKS) carry the 'KMSKS' region motif. K311 is an ATP binding site. Residues 557-657 (DFDKVEIKAA…SAIPNGAVIK (101 aa)) form the tRNA-binding domain.

Belongs to the class-I aminoacyl-tRNA synthetase family. MetG type 2B subfamily. Homodimer.

Its subcellular location is the cytoplasm. It carries out the reaction tRNA(Met) + L-methionine + ATP = L-methionyl-tRNA(Met) + AMP + diphosphate. In terms of biological role, is required not only for elongation of protein synthesis but also for the initiation of all mRNA translation through initiator tRNA(fMet) aminoacylation. This Staphylococcus aureus (strain MRSA252) protein is Methionine--tRNA ligase.